Here is a 653-residue protein sequence, read N- to C-terminus: Fusexin 1 (653 aa).

An N-terminal signal peptide occupies residues Met-1–Ala-23. Residues Ala-24–Gly-559 lie on the Extracellular side of the membrane. Intrachain disulfides connect Cys-126–Cys-166, Cys-397–Cys-440, Cys-467–Cys-490, and Cys-502–Cys-519. The segment at Asp-154–Gln-159 is fusion loop. Residues Ala-560–Val-580 traverse the membrane as a helical segment. Over Gly-581–Asp-600 the chain is Cytoplasmic. 2 helical membrane-spanning segments follow: residues Ala-601–Gln-621 and Leu-622–Leu-642. Topologically, residues Tyr-643–Leu-653 are cytoplasmic.

Belongs to the HAP2/GCS1 family. Fusexin 1 subfamily. Homotrimer stabilized by interdomain contacts and numerous Ca(2+) and Na(+) ions.

Its subcellular location is the cell surface. It is found in the cell membrane. Functionally, exhibits fusogenic activity. Mediates cell-cell fusion in mammalian cells (bilateral fusion). The protein is Fusexin 1 of Haloferax sp. (strain Q22).